Reading from the N-terminus, the 105-residue chain is U1-sicaritoxin-Li1b (105 aa).

The N-terminal stretch at 1 to 19 (MKLLFEGLLVLVLIAFVVA) is a signal peptide. A propeptide spanning residues 20–36 (EFESDAEKWEALITQER) is cleaved from the precursor. Disulfide bonds link C38-C55, C46-C60, C54-C73, and C62-C71. R82 bears the Arginine amide mark. Residues 86–105 (ALMVDPETHRMLSLHRLSEE) constitute a propeptide that is removed on maturation.

This sequence belongs to the neurotoxin 28 (Litx) family. As to expression, expressed by the venom gland.

It is found in the secreted. Functionally, toxin active against insects (S.frugiperda larvae). May act on sodium (Nav) or calcium (Cav) channels. In Loxosceles intermedia (Brown spider), this protein is U1-sicaritoxin-Li1b.